A 496-amino-acid chain; its full sequence is Probable CtpA-like serine protease (496 aa).

The span at 1–16 (MDDKQHTTSSDDERAE) shows a compositional bias: basic and acidic residues. The disordered stretch occupies residues 1-27 (MDDKQHTTSSDDERAENATSNQDQQTN). Residues 17 to 27 (NATSNQDQQTN) show a composition bias toward polar residues. A helical membrane pass occupies residues 39-59 (FISILIGTIIITAVITVVAYI). Residues 124–206 (TKSFNEGVSG…TEVTLTVQRG (83 aa)) form the PDZ domain. Catalysis depends on charge relay system residues S329, D340, and K354.

This sequence belongs to the peptidase S41A family.

It is found in the cell membrane. The sequence is that of Probable CtpA-like serine protease from Staphylococcus aureus (strain MRSA252).